Reading from the N-terminus, the 183-residue chain is Translation initiation factor IF-3 (183 aa).

This sequence belongs to the IF-3 family. Monomer.

The protein localises to the cytoplasm. Its function is as follows. IF-3 binds to the 30S ribosomal subunit and shifts the equilibrium between 70S ribosomes and their 50S and 30S subunits in favor of the free subunits, thus enhancing the availability of 30S subunits on which protein synthesis initiation begins. This chain is Translation initiation factor IF-3, found in Azobacteroides pseudotrichonymphae genomovar. CFP2.